Here is a 783-residue protein sequence, read N- to C-terminus: Glucosidase YgjK (783 aa).

A signal peptide spans 1 to 22 (MKIKTILTPVTCALLISFSAHA). Positions 24–254 (NADNYKNVIN…TTLYTTYSHL (231 aa)) are N-terminal domain. Positions 254–299 (LLTAQEVSKEQMQIRDILARPAFYLTASQQRWEEYLKKGLTNPDAT) are linker. Residues 300-783 (PEQTRVAVKA…MLYNDFFRKQ (484 aa)) are a domain. 5 residues coordinate Ca(2+): Asp454, Asn456, Asn458, Val460, and Glu462. Residue Asp524 is the Proton donor of the active site. A Ca(2+)-binding site is contributed by Glu572. Glu750 serves as the catalytic Proton acceptor.

Belongs to the glycosyl hydrolase 63 family.

Its function is as follows. Glucoside hydrolase that cleaves the alpha-1,3-glucosidic linkage in nigerose. Has very low activity towards maltooligosaccharides, soluble starch, nigerotriose, kojibiose and trehalose. The polypeptide is Glucosidase YgjK (ygjK) (Escherichia coli (strain K12)).